The following is a 234-amino-acid chain: MQFNKPLRQGVLQKRYKRFLADIDFGDNETTTTHCPNTGAMTGCAEPGFTAWCSVSDNPKRKYSLTWELAQNNNGEMIVVNTQHANRMAGELLQTNLVPELSQWQELKPEQRYGKEKSRIDWWGVDQHNRECFIEVKSVTLADASQGYFPDAVSQRAHKHLNELMQVVADGHRAVQLYMVMHDGIERVSPAAHIDSQYAELCRKAASVGVEFYAVKCRASAKEIKLERPVPVSL.

The protein belongs to the SfsA family.

The sequence is that of Sugar fermentation stimulation protein homolog from Idiomarina loihiensis (strain ATCC BAA-735 / DSM 15497 / L2-TR).